We begin with the raw amino-acid sequence, 363 residues long: U-box domain-containing protein 62 (363 aa).

The disordered stretch occupies residues Lys-74 to Gly-117. Positions Asp-87–Glu-107 are enriched in acidic residues. The region spanning Ser-181–Gln-253 is the U-box domain. Residues Ala-343–Leu-363 are disordered.

The enzyme catalyses S-ubiquitinyl-[E2 ubiquitin-conjugating enzyme]-L-cysteine + [acceptor protein]-L-lysine = [E2 ubiquitin-conjugating enzyme]-L-cysteine + N(6)-ubiquitinyl-[acceptor protein]-L-lysine.. It functions in the pathway protein modification; protein ubiquitination. Its function is as follows. Functions as an E3 ubiquitin ligase. The sequence is that of U-box domain-containing protein 62 (PUB62) from Arabidopsis thaliana (Mouse-ear cress).